A 116-amino-acid chain; its full sequence is Large ribosomal subunit protein bL17 (116 aa).

Belongs to the bacterial ribosomal protein bL17 family. In terms of assembly, part of the 50S ribosomal subunit. Contacts protein L32.

In Prochlorococcus marinus (strain MIT 9211), this protein is Large ribosomal subunit protein bL17.